The following is a 346-amino-acid chain: MKFLDEAKVYIRSGDGGNGCVAFRREKFIEFGGPSGGNGGRGGNVIIEVADGLNTLIDYRYQQHFKAQKGENGAGSDRHGANGKNIVLKVPMGTQIFDEDRETLIHDFTNVGEKFVLAEGGNGGFGNAHFKSSTNRAPRNANPGQPGEERWIWLRLKLIADAGLVGLPNAGKSTFLSKVSAAKPKIADYPFTTLHPQLGVVNADGREFVLADIPGLIEGAHEGAGLGDRFLGHVERCRVLLHLVDATCEHAGKAYKTVRTELDAYGGLLTDKIEIVALNKIDAVEPDELKKQKDRLKRAAKKTPLLLSAATGEGVKEALRALVAVIGEAPVSAKAKSAAEAEPWSA.

Residues 1 to 159 (MKFLDEAKVY…RWIWLRLKLI (159 aa)) form the Obg domain. The OBG-type G domain occupies 160 to 327 (ADAGLVGLPN…ALRALVAVIG (168 aa)). GTP is bound by residues 166–173 (GLPNAGKS), 191–195 (FTTLH), 212–215 (DIPG), 279–282 (NKID), and 308–310 (SAA). Mg(2+) is bound by residues Ser173 and Thr193.

Belongs to the TRAFAC class OBG-HflX-like GTPase superfamily. OBG GTPase family. As to quaternary structure, monomer. Mg(2+) is required as a cofactor.

Its subcellular location is the cytoplasm. In terms of biological role, an essential GTPase which binds GTP, GDP and possibly (p)ppGpp with moderate affinity, with high nucleotide exchange rates and a fairly low GTP hydrolysis rate. Plays a role in control of the cell cycle, stress response, ribosome biogenesis and in those bacteria that undergo differentiation, in morphogenesis control. The protein is GTPase Obg of Bradyrhizobium diazoefficiens (strain JCM 10833 / BCRC 13528 / IAM 13628 / NBRC 14792 / USDA 110).